We begin with the raw amino-acid sequence, 97 residues long: Large ribosomal subunit protein uL23 (97 aa).

Belongs to the universal ribosomal protein uL23 family. Part of the 50S ribosomal subunit. Contacts protein L29, and trigger factor when it is bound to the ribosome.

Its function is as follows. One of the early assembly proteins it binds 23S rRNA. One of the proteins that surrounds the polypeptide exit tunnel on the outside of the ribosome. Forms the main docking site for trigger factor binding to the ribosome. In Lactiplantibacillus plantarum (strain ATCC BAA-793 / NCIMB 8826 / WCFS1) (Lactobacillus plantarum), this protein is Large ribosomal subunit protein uL23.